The following is a 118-amino-acid chain: Large ribosomal subunit protein bL20 (118 aa).

Belongs to the bacterial ribosomal protein bL20 family.

Its function is as follows. Binds directly to 23S ribosomal RNA and is necessary for the in vitro assembly process of the 50S ribosomal subunit. It is not involved in the protein synthesizing functions of that subunit. The sequence is that of Large ribosomal subunit protein bL20 from Proteus mirabilis (strain HI4320).